Consider the following 202-residue polypeptide: U-Kazal-Dg21.2 (202 aa).

Positions 1–20 (MKYFLWSAVTIFAIVNVVGA) are cleaved as a signal peptide. A propeptide spanning residues 21 to 87 (KNSDFDPRCL…SFCQVEEDFD (67 aa)) is cleaved from the precursor. 3 Kazal-like domains span residues 23 to 77 (SDFD…KTLM), 85 to 140 (DFDS…ICRN), and 148 to 202 (IDPK…KGEC). Intrachain disulfides connect C29-C62, C33-C55, C91-C124, C95-C117, and C103-C138. N140 is a glycosylation site (N-linked (GlcNAc...) asparagine). The propeptide occupies 142-202 (SFKSELIDPK…NWTLIRKGEC (61 aa)). Disulfide bonds link C154–C187, C158–C180, and C166–C202. Residue N193 is glycosylated (N-linked (GlcNAc...) asparagine).

Expressed by the venom gland.

Its subcellular location is the secreted. Functionally, may act as a serine protease inhibitor, since it possess the kazal serine protease inhibitor signature. The recombinant peptide does not produce toxic effects on insects. The chain is U-Kazal-Dg21.2 from Dolopus genitalis (Giant Australian assassin fly).